The sequence spans 2892 residues: Inositol 1,4,5-trisphosphate receptor itr-1 (2892 aa).

The Cytoplasmic segment spans residues 1–2475; sequence MNPSYGRVRK…YPLPEHSNSS (2475 aa). 4 consecutive MIR domains span residues 192-246, 319-379, 386-466, and 490-551; these read GNVI…IEPA, QNSV…VQVV, GGTA…LGPT, and NKEV…LLPV. 357–361 lines the 1D-myo-inositol 1,4,5-trisphosphate pocket; that stretch reads RMTNR. 1D-myo-inositol 1,4,5-trisphosphate is bound by residues 625-628 and 689-691; these read KLLR and YRK. The segment at 1030–1056 is disordered; that stretch reads MMRGGNKENSKDLAKTPSVTAEEAGRT. The segment covering 1034–1043 has biased composition (basic and acidic residues); that stretch reads GNKENSKDLA. Residues 2476–2496 form a helical membrane-spanning segment; the sequence is ISLGNLYSWFAVFSSFLLAHY. At 2497 to 2514 the chain is on the extracellular side; that stretch reads LRHDKIYLHKTSLLILAS. A helical membrane pass occupies residues 2515-2535; it reads LCFLLLSSIGVTLTLYIFGIL. Residues 2536-2572 lie on the Cytoplasmic side of the membrane; it reads QLVNKIVHVVAFVSNKGLEDRPIAEILACRNLHYLLV. The chain crosses the membrane as a helical span at residues 2573–2593; that stretch reads YLFICILGLLVHPMIYCILLF. At 2594–2615 the chain is on the extracellular side; the sequence is DIIFTEETLQNVIASVTRNYQS. Residues 2616 to 2636 traverse the membrane as a helical segment; it reads IVWTGLLALILLYFFSILGFL. The Cytoplasmic segment spans residues 2637–2735; the sequence is YFRHDFYLEV…FIWRVAYDMT (99 aa). The segment covering 2655 to 2666 has biased composition (polar residues); the sequence is ATISSGIPSETC. Positions 2655 to 2685 are disordered; the sequence is ATISSGIPSETCPSEGCPGLQPSEKDDNDDE. The helical transmembrane segment at 2736–2756 threads the bilayer; sequence FFVVLIVIVLNLIFGVIIDTF. Residues 2757–2892 are Extracellular-facing; sequence GDLRAEKNEK…RAFMEQFQPR (136 aa).

It belongs to the InsP3 receptor family. Interacts with myo-1, myo-2, unc-54/myo-4 and nmy-2. Also interacts with iri-1. In terms of tissue distribution, isoform a is expressed in the anterior cells of the pharyngeal terminal bulb, vulva, rectal epithelial cells, spicule protractor muscles of the proctodeum and male-specific neuron CP8 or CP9. Isoform d is expressed in the spermatheca, excretory cell, amphid socket cells, PDA motor neuron, spicule retractor muscles, gubernaculum retractor muscles, posterior oblique muscles, diagonal muscles and the vas deferens. Also expressed in the intestine, pharynx, pharyngeal isthmus, pharyngeal intestinal valve, somatic gonad, hypodermal cells of the vulva, uterine sheath cells, tail, head, LUA motor neuron and the embryonic epidermis (at protein level).

Its subcellular location is the endoplasmic reticulum membrane. Functionally, receptor for inositol 1,4,5-trisphosphate, a second messenger that regulates intracellular calcium homeostasis. Binds in vitro to both inositol 1,4,5-trisphosphate (1,4,5-InsP3) and inositol 2,4,5-trisphosphate (2,4,5-InsP3) with high affinity and does not discriminate between the phosphate at 1 or 2 position. Can also bind inositol 1,3,4,5-tetrakisphosphate (1,3,4,5-InsP4) and inositol 4,5-bisphosphate (4,5-InsP2), but with lower affinity. Acts as a timekeeper/rhythm generator via calcium signaling, affecting the defecation cycle and pharyngeal pumping. Affects normal hermaphrodite and male fertility as a participant in intracellular signaling by acting downstream of let-23/lin-3 which regulates ovulation, spermathecal valve dilation and male mating behavior. Important for early embryonic development; controls epidermal cell migration and may also regulate filopodial protrusive activity during epithelial morphogenesis. Component of inositol trisphosphate (IP3)-mediated downstream signaling pathways that controls amphid sensory neuronal (ASH)-mediated response to nose touch and benzaldehyde but not other ASH-mediated responses. Involved in modulating lifespan, acting downstream of transcription factor atf-6. The protein is Inositol 1,4,5-trisphosphate receptor itr-1 of Caenorhabditis elegans.